The chain runs to 2153 residues: RNA-directed RNA polymerase L (2153 aa).

Mn(2+) is bound by residues histidine 36, glutamate 54, aspartate 97, glutamate 110, and valine 111. Lysine 124 (for endonuclease activity) is an active-site residue. The 187-residue stretch at 957–1143 folds into the RdRp catalytic domain; that stretch reads TGKKIRFKRK…AVNQEMWKSM (187 aa). Aspartate 1100 serves as a coordination point for Mg(2+).

Belongs to the Bunyavirales RNA polymerase family. As to quaternary structure, interacts with the viral nucleoprotein. It depends on Mn(2+) as a cofactor. Mg(2+) is required as a cofactor.

The protein resides in the host cytoplasm. Its subcellular location is the host perinuclear region. It carries out the reaction RNA(n) + a ribonucleoside 5'-triphosphate = RNA(n+1) + diphosphate. Its function is as follows. RNA-dependent RNA polymerase, which is responsible for the replication and transcription of the viral RNA genome using antigenomic RNA as an intermediate. During transcription, synthesizes subgenomic RNAs and assures their capping by a cap-snatching mechanism, which involves the endonuclease activity cleaving the host capped pre-mRNAs. These short capped RNAs are then used as primers for viral transcription. Cleaves ssRNA substrates but not DNA. Seems to downregulate the expression of its own and heterologous mRNAs through its endonuclease activity. The chain is RNA-directed RNA polymerase L from Black Creek Canal orthohantavirus (BCCV).